The chain runs to 267 residues: NADP-dependent mannitol dehydrogenase (267 aa).

Residues N108 and K141 each contribute to the NADP(+) site. S160 acts as the Proton donor in catalysis. NADP(+)-binding residues include Y175, K179, I207, and T209. Y175 functions as the Proton acceptor in the catalytic mechanism. K179 serves as the catalytic Lowers pKa of active site Tyr.

This sequence belongs to the short-chain dehydrogenases/reductases (SDR) family. In terms of assembly, exists as monomer, dimer and tetramer.

The enzyme catalyses D-mannitol + NADP(+) = D-fructose + NADPH + H(+). Functionally, interconverts D-mannitol and D-fructose. Not active with fructose 6-phosphate or NADH. The protein is NADP-dependent mannitol dehydrogenase of Davidiella tassiana (Mycosphaerella tassiana).